Consider the following 57-residue polypeptide: Large ribosomal subunit protein bL32 (57 aa).

It belongs to the bacterial ribosomal protein bL32 family.

The protein is Large ribosomal subunit protein bL32 of Geobacillus kaustophilus (strain HTA426).